The following is a 196-amino-acid chain: uncharacterized protein (196 aa).

CBS domains follow at residues 10–69 (ARRD…NPDE) and 76–132 (MSQP…LVAT). An ACP-type MB domain is found at 153-187 (IIEGVCDLCETYSEELRFVDGVWVCPECYEDILGR). Positions 158, 161, 177, and 180 each coordinate Fe cation. The Zn(2+) site is built by cysteine 158, cysteine 161, cysteine 177, and cysteine 180.

This is an uncharacterized protein from Methanopyrus kandleri (strain AV19 / DSM 6324 / JCM 9639 / NBRC 100938).